The chain runs to 162 residues: Sorting nexin-3 (162 aa).

A disordered region spans residues 1 to 23; it reads MPREFKSFGSTEKSLLSKGHGEP. A PX domain is found at 38-161; it reads IEVHNPKTHI…VRFIEAEKFV (124 aa). A 1,2-diacyl-sn-glycero-3-phospho-(1D-myo-inositol-3-phosphate)-binding residues include arginine 81, serine 83, lysine 112, and arginine 127.

The protein belongs to the sorting nexin family. In terms of assembly, monomer. Interacts with RBD2, YIF1, YIP1 and YIP5.

The protein resides in the cytoplasm. It is found in the golgi apparatus membrane. The protein localises to the prevacuolar compartment membrane. Functionally, required for retention of late Golgi membrane proteins. Component of the retrieval machinery that functions by direct interaction with the cytosolic tails of certain TGN membrane proteins during the sorting/budding process at the prevacuolar compartment. Binds phosphatidylinositol 3-phosphate (PtdIns(P3)). This chain is Sorting nexin-3 (SNX3), found in Saccharomyces cerevisiae (strain ATCC 204508 / S288c) (Baker's yeast).